The primary structure comprises 63 residues: Cytochrome c oxidase subunit 7C, mitochondrial (63 aa).

Residues 1 to 16 (MLGHSIRRFTTSVVRR) constitute a mitochondrion transit peptide. At 17–33 (SHYEEGPGKNLPFSVEN) the chain is on the mitochondrial matrix side. N6-acetyllysine; alternate is present on Lys-25. Residue Lys-25 is modified to N6-succinyllysine; alternate. Residues 34–60 (KWTLLVKMCLFFGSAFSVPFLIVRHQL) traverse the membrane as a helical segment. Residues 61–63 (LKQ) are Mitochondrial intermembrane-facing.

Belongs to the cytochrome c oxidase VIIc family. As to quaternary structure, component of the cytochrome c oxidase (complex IV, CIV), a multisubunit enzyme composed of 14 subunits. The complex is composed of a catalytic core of 3 subunits MT-CO1, MT-CO2 and MT-CO3, encoded in the mitochondrial DNA, and 11 supernumerary subunits COX4I, COX5A, COX5B, COX6A, COX6B, COX6C, COX7A, COX7B, COX7C, COX8 and NDUFA4, which are encoded in the nuclear genome. The complex exists as a monomer or a dimer and forms supercomplexes (SCs) in the inner mitochondrial membrane with NADH-ubiquinone oxidoreductase (complex I, CI) and ubiquinol-cytochrome c oxidoreductase (cytochrome b-c1 complex, complex III, CIII), resulting in different assemblies (supercomplex SCI(1)III(2)IV(1) and megacomplex MCI(2)III(2)IV(2)). Interacts with RAB5IF.

The protein resides in the mitochondrion inner membrane. The protein operates within energy metabolism; oxidative phosphorylation. Functionally, component of the cytochrome c oxidase, the last enzyme in the mitochondrial electron transport chain which drives oxidative phosphorylation. The respiratory chain contains 3 multisubunit complexes succinate dehydrogenase (complex II, CII), ubiquinol-cytochrome c oxidoreductase (cytochrome b-c1 complex, complex III, CIII) and cytochrome c oxidase (complex IV, CIV), that cooperate to transfer electrons derived from NADH and succinate to molecular oxygen, creating an electrochemical gradient over the inner membrane that drives transmembrane transport and the ATP synthase. Cytochrome c oxidase is the component of the respiratory chain that catalyzes the reduction of oxygen to water. Electrons originating from reduced cytochrome c in the intermembrane space (IMS) are transferred via the dinuclear copper A center (CU(A)) of subunit 2 and heme A of subunit 1 to the active site in subunit 1, a binuclear center (BNC) formed by heme A3 and copper B (CU(B)). The BNC reduces molecular oxygen to 2 water molecules using 4 electrons from cytochrome c in the IMS and 4 protons from the mitochondrial matrix. In Macaca fascicularis (Crab-eating macaque), this protein is Cytochrome c oxidase subunit 7C, mitochondrial (COX7C).